Here is a 79-residue protein sequence, read N- to C-terminus: Sulfur carrier protein TusA (79 aa).

The active-site Cysteine persulfide intermediate is C17.

The protein belongs to the sulfur carrier protein TusA family.

The protein resides in the cytoplasm. Functionally, sulfur carrier protein which probably makes part of a sulfur-relay system. The chain is Sulfur carrier protein TusA from Haemophilus influenzae (strain ATCC 51907 / DSM 11121 / KW20 / Rd).